The chain runs to 126 residues: MPTLNQLVRQGRRRFEARSKSPALRGCPQLRGVCTKVYTTTPKKPNSALRKVAKVRLSNRLEVISYIGGEGHNLQEHSMVLVRGGRVKDLPGVRYHIVRGALDAGGVRERRRSRSKYGAKMPRSAA.

Asp-89 is modified (3-methylthioaspartic acid). The disordered stretch occupies residues 106–126 (GVRERRRSRSKYGAKMPRSAA).

It belongs to the universal ribosomal protein uS12 family. In terms of assembly, part of the 30S ribosomal subunit. Contacts proteins S8 and S17. May interact with IF1 in the 30S initiation complex.

Its function is as follows. With S4 and S5 plays an important role in translational accuracy. Interacts with and stabilizes bases of the 16S rRNA that are involved in tRNA selection in the A site and with the mRNA backbone. Located at the interface of the 30S and 50S subunits, it traverses the body of the 30S subunit contacting proteins on the other side and probably holding the rRNA structure together. The combined cluster of proteins S8, S12 and S17 appears to hold together the shoulder and platform of the 30S subunit. In Tremblaya princeps, this protein is Small ribosomal subunit protein uS12.